Reading from the N-terminus, the 155-residue chain is uncharacterized protein (155 aa).

2 consecutive transmembrane segments (helical) span residues 33–53 (ITLL…LFLL) and 83–103 (IGAV…GIWV).

This sequence to E.coli YdgK.

It is found in the cell membrane. This is an uncharacterized protein from Synechocystis sp. (strain ATCC 27184 / PCC 6803 / Kazusa).